We begin with the raw amino-acid sequence, 445 residues long: Phosphoglucosamine mutase (445 aa).

Ser-102 (phosphoserine intermediate) is an active-site residue. The Mg(2+) site is built by Ser-102, Asp-241, Asp-243, and Asp-245. Ser-102 carries the phosphoserine modification.

The protein belongs to the phosphohexose mutase family. Mg(2+) serves as cofactor. Post-translationally, activated by phosphorylation.

The enzyme catalyses alpha-D-glucosamine 1-phosphate = D-glucosamine 6-phosphate. Its function is as follows. Catalyzes the conversion of glucosamine-6-phosphate to glucosamine-1-phosphate. In Photorhabdus laumondii subsp. laumondii (strain DSM 15139 / CIP 105565 / TT01) (Photorhabdus luminescens subsp. laumondii), this protein is Phosphoglucosamine mutase.